A 73-amino-acid chain; its full sequence is Translation initiation factor IF-1 (73 aa).

In terms of domain architecture, S1-like spans 1–73; that stretch reads MAKKDGAIEI…TRGRIVYRYK (73 aa).

The protein belongs to the IF-1 family. As to quaternary structure, component of the 30S ribosomal translation pre-initiation complex which assembles on the 30S ribosome in the order IF-2 and IF-3, IF-1 and N-formylmethionyl-tRNA(fMet); mRNA recruitment can occur at any time during PIC assembly.

It localises to the cytoplasm. Functionally, one of the essential components for the initiation of protein synthesis. Stabilizes the binding of IF-2 and IF-3 on the 30S subunit to which N-formylmethionyl-tRNA(fMet) subsequently binds. Helps modulate mRNA selection, yielding the 30S pre-initiation complex (PIC). Upon addition of the 50S ribosomal subunit IF-1, IF-2 and IF-3 are released leaving the mature 70S translation initiation complex. The sequence is that of Translation initiation factor IF-1 from Thermobifida fusca (strain YX).